A 192-amino-acid polypeptide reads, in one-letter code: dTTP/UTP pyrophosphatase (192 aa).

Asp-72 (proton acceptor) is an active-site residue.

Belongs to the Maf family. YhdE subfamily. Requires a divalent metal cation as cofactor.

It localises to the cytoplasm. The catalysed reaction is dTTP + H2O = dTMP + diphosphate + H(+). The enzyme catalyses UTP + H2O = UMP + diphosphate + H(+). Its function is as follows. Nucleoside triphosphate pyrophosphatase that hydrolyzes dTTP and UTP. May have a dual role in cell division arrest and in preventing the incorporation of modified nucleotides into cellular nucleic acids. This Hydrogenovibrio crunogenus (strain DSM 25203 / XCL-2) (Thiomicrospira crunogena) protein is dTTP/UTP pyrophosphatase.